Here is a 130-residue protein sequence, read N- to C-terminus: Mitochondrial import protein 1 (130 aa).

The disordered stretch occupies residues 1–41; sequence MSAEEISNPLAESGVTISSDSEQYSAPESASPQSPSSSSPA. A compositionally biased stretch (polar residues) spans 15–24; sequence VTISSDSEQY. Over residues 25–41 the composition is skewed to low complexity; it reads SAPESASPQSPSSSSPA.

Belongs to the MIM1 family.

It is found in the mitochondrion outer membrane. Functionally, required for the assembly of the TOM (translocase of outer membrane) receptor complex, which is responsible for the recognition and translocation of cytosolically synthesized mitochondrial preproteins. The polypeptide is Mitochondrial import protein 1 (Neurospora crassa (strain ATCC 24698 / 74-OR23-1A / CBS 708.71 / DSM 1257 / FGSC 987)).